The chain runs to 232 residues: Cysteine proteinase inhibitor 7 (232 aa).

The signal sequence occupies residues 1–29 (MDMRRASMCMMLICVSLVLLSGFGQFVIC). Cystatin domains follow at residues 46–135 (GGFS…KNII) and 152–214 (FDWR…ERGN). The short motif at 91 to 95 (QVVAG) is the Secondary area of contact element. Phosphoserine is present on serine 181.

The protein belongs to the cystatin family. Phytocystatin subfamily.

Its subcellular location is the secreted. In terms of biological role, specific inhibitor of cysteine proteinases. Probably involved in the regulation of endogenous processes and in defense against pests and pathogens. The chain is Cysteine proteinase inhibitor 7 (CYS7) from Arabidopsis thaliana (Mouse-ear cress).